Consider the following 366-residue polypeptide: Anhydro-N-acetylmuramic acid kinase (366 aa).

15 to 22 lines the ATP pocket; sequence GTSLDGVD.

It belongs to the anhydro-N-acetylmuramic acid kinase family.

It carries out the reaction 1,6-anhydro-N-acetyl-beta-muramate + ATP + H2O = N-acetyl-D-muramate 6-phosphate + ADP + H(+). It functions in the pathway amino-sugar metabolism; 1,6-anhydro-N-acetylmuramate degradation. The protein operates within cell wall biogenesis; peptidoglycan recycling. Functionally, catalyzes the specific phosphorylation of 1,6-anhydro-N-acetylmuramic acid (anhMurNAc) with the simultaneous cleavage of the 1,6-anhydro ring, generating MurNAc-6-P. Is required for the utilization of anhMurNAc either imported from the medium or derived from its own cell wall murein, and thus plays a role in cell wall recycling. This is Anhydro-N-acetylmuramic acid kinase from Hydrogenovibrio crunogenus (strain DSM 25203 / XCL-2) (Thiomicrospira crunogena).